We begin with the raw amino-acid sequence, 169 residues long: Small ribosomal subunit protein uS5 (169 aa).

Residues 13-76 enclose the S5 DRBM domain; it reads LVEKLVSVRR…EKARRNMKDV (64 aa).

The protein belongs to the universal ribosomal protein uS5 family. As to quaternary structure, part of the 30S ribosomal subunit. Contacts proteins S4 and S8.

Its function is as follows. With S4 and S12 plays an important role in translational accuracy. Functionally, located at the back of the 30S subunit body where it stabilizes the conformation of the head with respect to the body. This chain is Small ribosomal subunit protein uS5, found in Hydrogenovibrio crunogenus (strain DSM 25203 / XCL-2) (Thiomicrospira crunogena).